The sequence spans 366 residues: UDP-N-acetylglucosamine--N-acetylmuramyl-(pentapeptide) pyrophosphoryl-undecaprenol N-acetylglucosamine transferase (366 aa).

Residues 10–12, N124, R166, S196, and Q297 each bind UDP-N-acetyl-alpha-D-glucosamine; that span reads TGG.

This sequence belongs to the glycosyltransferase 28 family. MurG subfamily.

The protein localises to the cell membrane. The enzyme catalyses di-trans,octa-cis-undecaprenyl diphospho-N-acetyl-alpha-D-muramoyl-L-alanyl-D-glutamyl-meso-2,6-diaminopimeloyl-D-alanyl-D-alanine + UDP-N-acetyl-alpha-D-glucosamine = di-trans,octa-cis-undecaprenyl diphospho-[N-acetyl-alpha-D-glucosaminyl-(1-&gt;4)]-N-acetyl-alpha-D-muramoyl-L-alanyl-D-glutamyl-meso-2,6-diaminopimeloyl-D-alanyl-D-alanine + UDP + H(+). The protein operates within cell wall biogenesis; peptidoglycan biosynthesis. Cell wall formation. Catalyzes the transfer of a GlcNAc subunit on undecaprenyl-pyrophosphoryl-MurNAc-pentapeptide (lipid intermediate I) to form undecaprenyl-pyrophosphoryl-MurNAc-(pentapeptide)GlcNAc (lipid intermediate II). The sequence is that of UDP-N-acetylglucosamine--N-acetylmuramyl-(pentapeptide) pyrophosphoryl-undecaprenol N-acetylglucosamine transferase from Alkaliphilus metalliredigens (strain QYMF).